Reading from the N-terminus, the 484-residue chain is Putative transporter B0252.3 (484 aa).

11 helical membrane passes run 43-63 (ILTCILVCGLAWSPLAFTGLC), 95-115 (STTTFYMVGNMIGGMFIPPLA), 121-141 (LPVFVATVLLMAVGGMISAFS), 144-164 (IMMFCIMRMIHGIFYTAAGLA), 183-203 (VYFGVMWVVGACFLGLLAYIL), 208-228 (YLMFCISVPNIFVALLIYMTV), 286-306 (MFIVYVLVMTYIWIVDTFIYF), 321-341 (LNFVLMSLVEAPAYIFSPIFM), 348-368 (VLISGTHIIAGLSFLGIVLSS), 373-393 (IHFWLLGKFAISCSFMSIYMF), and 433-453 (LAPAITLSLIAVSGGLLTLIL).

The protein belongs to the major facilitator superfamily. Sugar transporter (TC 2.A.1.1) family.

Its subcellular location is the membrane. This Caenorhabditis elegans protein is Putative transporter B0252.3.